The sequence spans 219 residues: Ribose-5-phosphate isomerase A (219 aa).

Substrate is bound by residues 28 to 31 (SGST), 81 to 84 (DGAD), and 94 to 97 (KGGG). Glu103 serves as the catalytic Proton acceptor. Lys121 contributes to the substrate binding site.

It belongs to the ribose 5-phosphate isomerase family. In terms of assembly, homodimer.

It catalyses the reaction aldehydo-D-ribose 5-phosphate = D-ribulose 5-phosphate. Its pathway is carbohydrate degradation; pentose phosphate pathway; D-ribose 5-phosphate from D-ribulose 5-phosphate (non-oxidative stage): step 1/1. Functionally, catalyzes the reversible conversion of ribose-5-phosphate to ribulose 5-phosphate. This chain is Ribose-5-phosphate isomerase A, found in Glaesserella parasuis serovar 5 (strain SH0165) (Haemophilus parasuis).